The primary structure comprises 419 residues: MRVIVLGSGVIGVASAYYLAQQGAHVTVLDRQTGPAEETSFGNAGQISPGYSTPWAAPGIPFKAVKWMFQHHAPLAINLDGSMWQLQWMAQMLKNCNPQSYSQNKERMMRVAEYSRDCLKSLRETTGISYENRAKGTLQVFRKEAQLEAVQRDIEVLQECGVSYELLYQDDLARVEPALEHAKDKLVGGLHLPNDETGDCYLFTNALAQKAKELGVNFQFNQNVEGLVVEGDEIKGVRVNGQVLKADRYVLAFGSYSRDFLKPLALNLPVYPVKGYSLTIPIVQPEFAPQSTVLDETYKIAITRFDQRIRVGGMAELSGFNLGLNQDRRATLEMVTQDLFPGGNMAEASFWTGLRPMTPDSTPIIGATRFKNLFLNTGHGTLGWTMACGSGKLISDIVLSHQTEISTEGLSLQRYSTAA.

Valine 3–tyrosine 17 contacts FAD.

It belongs to the DadA oxidoreductase family. It depends on FAD as a cofactor.

It carries out the reaction a D-alpha-amino acid + A + H2O = a 2-oxocarboxylate + AH2 + NH4(+). It participates in amino-acid degradation; D-alanine degradation; NH(3) and pyruvate from D-alanine: step 1/1. In terms of biological role, oxidative deamination of D-amino acids. This Acinetobacter baylyi (strain ATCC 33305 / BD413 / ADP1) protein is D-amino acid dehydrogenase.